Consider the following 564-residue polypeptide: Kelch repeat and BTB domain-containing protein 1 (564 aa).

Residues 21–88 form the BTB domain; it reads CDINIVINDE…IYGIPLSLTN (68 aa). 6 Kelch repeats span residues 252–297, 298–346, 347–395, 397–441, 442–492, and 494–539; these read IELI…VLDN, IIYM…ADDE, YIYC…MLNG, IYVI…VHDG, KIYI…SAHN, and LYVG…CEPI.

It belongs to the poxviruses Kelch family. Interacts (via BTB domain) with host CUL3.

It localises to the host cytoplasm. Its function is as follows. Probable substrate-specific adapter of CUL3-containing E3 ubiquitin-protein ligases which mediate the ubiquitination and subsequent proteasomal degradation of host target proteins. The protein is Kelch repeat and BTB domain-containing protein 1 (KBTB1) of Homo sapiens (Human).